The following is a 424-amino-acid chain: Protein shisa-9 (424 aa).

A signal peptide spans 1-23 (MRRVLRLLLGCFLTELCARVCRA). Over 24–149 (QERAGHGQLA…DPLHDPTKDK (126 aa)) the chain is Extracellular. Residues N45, N89, and N116 are each glycosylated (N-linked (GlcNAc...) asparagine). A helical transmembrane segment spans residues 150–170 (TNLIVYIICGVVAVMVLVGIF). Topologically, residues 171–424 (TKLGLEKAHR…ITNSKTEVTV (254 aa)) are cytoplasmic. The segment at 333–424 (PRAFSPEHGP…ITNSKTEVTV (92 aa)) is disordered. The span at 414 to 424 (FITNSKTEVTV) shows a compositional bias: polar residues.

This sequence belongs to the shisa family. SHISA9 subfamily. As to quaternary structure, component of some AMPA receptors (ionotropic glutamate receptors) complex, at least composed of some AMPA receptor (GRIA1, GRIA2 and/or GRIA3), CACNG2 and SHISA9, as well as low level of DLG4.

The protein resides in the cell projection. The protein localises to the dendritic spine membrane. Its subcellular location is the synapse. Regulator of short-term neuronal synaptic plasticity in the dentate gyrus. Associates with AMPA receptors (ionotropic glutamate receptors) in synaptic spines and promotes AMPA receptor desensitization at excitatory synapses. The chain is Protein shisa-9 (SHISA9) from Homo sapiens (Human).